We begin with the raw amino-acid sequence, 345 residues long: Phenylalanine--tRNA ligase alpha subunit (345 aa).

A Mg(2+)-binding site is contributed by E259.

It belongs to the class-II aminoacyl-tRNA synthetase family. Phe-tRNA synthetase alpha subunit type 1 subfamily. Tetramer of two alpha and two beta subunits. The cofactor is Mg(2+).

The protein localises to the cytoplasm. The catalysed reaction is tRNA(Phe) + L-phenylalanine + ATP = L-phenylalanyl-tRNA(Phe) + AMP + diphosphate + H(+). The polypeptide is Phenylalanine--tRNA ligase alpha subunit (Nitrosomonas europaea (strain ATCC 19718 / CIP 103999 / KCTC 2705 / NBRC 14298)).